We begin with the raw amino-acid sequence, 218 residues long: Small ribosomal subunit protein uS3 (218 aa).

A KH type-2 domain is found at 38–106 (LRSDLKKKLM…PVHLNIEEVK (69 aa)).

This sequence belongs to the universal ribosomal protein uS3 family. As to quaternary structure, part of the 30S ribosomal subunit. Forms a tight complex with proteins S10 and S14.

Functionally, binds the lower part of the 30S subunit head. Binds mRNA in the 70S ribosome, positioning it for translation. The polypeptide is Small ribosomal subunit protein uS3 (Legionella pneumophila (strain Lens)).